The sequence spans 259 residues: Phosphate import ATP-binding protein PstB 1 (259 aa).

One can recognise an ABC transporter domain in the interval 13 to 254 (IETKDVDLFY…PAEKETEDYI (242 aa)). 45–52 (GPSGCGKS) serves as a coordination point for ATP.

It belongs to the ABC transporter superfamily. Phosphate importer (TC 3.A.1.7) family. In terms of assembly, the complex is composed of two ATP-binding proteins (PstB), two transmembrane proteins (PstC and PstA) and a solute-binding protein (PstS).

Its subcellular location is the cell membrane. The catalysed reaction is phosphate(out) + ATP + H2O = ADP + 2 phosphate(in) + H(+). Its function is as follows. Part of the ABC transporter complex PstSACB involved in phosphate import. Responsible for energy coupling to the transport system. The chain is Phosphate import ATP-binding protein PstB 1 from Listeria innocua serovar 6a (strain ATCC BAA-680 / CLIP 11262).